A 366-amino-acid polypeptide reads, in one-letter code: Holliday junction branch migration complex subunit RuvB (366 aa).

The tract at residues 1–49 (MAIISSKKQPPEPNGQPNKRPESAPAAPKEKVLQPEAAIDEQGKQEESI) is disordered. Positions 13–210 (PNGQPNKRPE…FGLIQKLRFY (198 aa)) are large ATPase domain (RuvB-L). ATP-binding positions include isoleucine 49, arginine 50, glycine 91, lysine 94, threonine 95, threonine 96, 157–159 (EDY), arginine 200, tyrosine 210, and arginine 247. Threonine 95 contributes to the Mg(2+) binding site. A small ATPAse domain (RuvB-S) region spans residues 211–281 (EVDELSQIVL…IAAEALQLFQ (71 aa)). The head domain (RuvB-H) stretch occupies residues 284–366 (PCGLDWTDRR…TPPNEQLSLL (83 aa)). DNA-binding residues include arginine 339 and arginine 344.

It belongs to the RuvB family. Homohexamer. Forms an RuvA(8)-RuvB(12)-Holliday junction (HJ) complex. HJ DNA is sandwiched between 2 RuvA tetramers; dsDNA enters through RuvA and exits via RuvB. An RuvB hexamer assembles on each DNA strand where it exits the tetramer. Each RuvB hexamer is contacted by two RuvA subunits (via domain III) on 2 adjacent RuvB subunits; this complex drives branch migration. In the full resolvosome a probable DNA-RuvA(4)-RuvB(12)-RuvC(2) complex forms which resolves the HJ.

It is found in the cytoplasm. The enzyme catalyses ATP + H2O = ADP + phosphate + H(+). Functionally, the RuvA-RuvB-RuvC complex processes Holliday junction (HJ) DNA during genetic recombination and DNA repair, while the RuvA-RuvB complex plays an important role in the rescue of blocked DNA replication forks via replication fork reversal (RFR). RuvA specifically binds to HJ cruciform DNA, conferring on it an open structure. The RuvB hexamer acts as an ATP-dependent pump, pulling dsDNA into and through the RuvAB complex. RuvB forms 2 homohexamers on either side of HJ DNA bound by 1 or 2 RuvA tetramers; 4 subunits per hexamer contact DNA at a time. Coordinated motions by a converter formed by DNA-disengaged RuvB subunits stimulates ATP hydrolysis and nucleotide exchange. Immobilization of the converter enables RuvB to convert the ATP-contained energy into a lever motion, pulling 2 nucleotides of DNA out of the RuvA tetramer per ATP hydrolyzed, thus driving DNA branch migration. The RuvB motors rotate together with the DNA substrate, which together with the progressing nucleotide cycle form the mechanistic basis for DNA recombination by continuous HJ branch migration. Branch migration allows RuvC to scan DNA until it finds its consensus sequence, where it cleaves and resolves cruciform DNA. The polypeptide is Holliday junction branch migration complex subunit RuvB (Trichormus variabilis (strain ATCC 29413 / PCC 7937) (Anabaena variabilis)).